The following is an 82-amino-acid chain: U16-lycotoxin-Ls1b (82 aa).

Residues 1-22 (MSPKVQALLLLVGLITFLEVHA) form the signal peptide. The propeptide occupies 23 to 34 (EEELSETVESER). 4 disulfides stabilise this stretch: Cys-36–Cys-51, Cys-43–Cys-56, Cys-50–Cys-67, and Cys-58–Cys-65.

It belongs to the neurotoxin 02 (plectoxin) family. 04 (U16-lycotoxin) subfamily. In terms of tissue distribution, expressed by the venom gland.

It is found in the secreted. This Lycosa singoriensis (Wolf spider) protein is U16-lycotoxin-Ls1b.